Consider the following 390-residue polypeptide: Pyruvate dehydrogenase E1 component subunit alpha, somatic form, mitochondrial (390 aa).

The N-terminal 29 residues, 1 to 29 (MRKMLAAVSRVLSGASQKPASRVLVASRN), are a transit peptide targeting the mitochondrion. Lys63 is subject to N6-acetyllysine; alternate. The residue at position 63 (Lys63) is an N6-succinyllysine; alternate. Pyruvate contacts are provided by His92, Tyr118, Arg119, Ala157, Gly165, Val167, Asp196, Gly197, Ala198, Asn225, and Tyr227. Thiamine diphosphate contacts are provided by Tyr118 and Arg119. 6 residues coordinate thiamine diphosphate: Gly165, Val167, Asp196, Gly197, Ala198, and Asn225. Residue Asp196 participates in Mg(2+) binding. Residues Asn225 and Tyr227 each coordinate Mg(2+). The residue at position 232 (Ser232) is a Phosphoserine; by PDK1. An N6-acetyllysine; alternate modification is found at Lys244. Position 244 is an N6-succinyllysine; alternate (Lys244). An N6-succinyllysine modification is found at Lys277. Thiamine diphosphate is bound at residue His292. Ser293 is subject to Phosphoserine; by PDK1, PDK2, PDK3 and PDK4. Ser295 bears the Phosphoserine mark. Ser300 carries the post-translational modification Phosphoserine; by PDK1, PDK2, PDK3 and PDK4. Tyr301 is modified (phosphotyrosine). N6-acetyllysine; alternate is present on Lys313. N6-succinyllysine; alternate is present on Lys313. N6-acetyllysine is present on residues Lys321 and Lys336. Lys385 carries the post-translational modification N6-succinyllysine.

In terms of assembly, heterotetramer of two PDHA1 and two PDHB subunits. The heterotetramer interacts with DLAT, and is part of the multimeric pyruvate dehydrogenase complex that contains multiple copies of pyruvate dehydrogenase (E1), dihydrolipoamide acetyltransferase (DLAT, E2) and lipoamide dehydrogenase (DLD, E3). These subunits are bound to an inner core composed of about 48 DLAT and 12 PDHX molecules. The cofactor is thiamine diphosphate. Requires Mg(2+) as cofactor. Phosphorylation at Ser-232, Ser-293 and Ser-300 by PDK family kinases inactivates the enzyme; for this phosphorylation at a single site is sufficient. Phosphorylation at Ser-293 interferes with access to active site, and thereby inactivates the enzyme. Dephosphorylation at all three sites, i.e. at Ser-232, Ser-293 and Ser-300, is required for reactivation. In terms of processing, acetylation alters the phosphorylation pattern. Deacetylated by SIRT3.

It is found in the mitochondrion matrix. It carries out the reaction N(6)-[(R)-lipoyl]-L-lysyl-[protein] + pyruvate + H(+) = N(6)-[(R)-S(8)-acetyldihydrolipoyl]-L-lysyl-[protein] + CO2. Its activity is regulated as follows. Pyruvate dehydrogenase activity is inhibited by phosphorylation of PDHA1; it is reactivated by dephosphorylation. Its function is as follows. The pyruvate dehydrogenase complex catalyzes the overall conversion of pyruvate to acetyl-CoA and CO(2), and thereby links the glycolytic pathway to the tricarboxylic cycle. This chain is Pyruvate dehydrogenase E1 component subunit alpha, somatic form, mitochondrial (PDHA1), found in Pan troglodytes (Chimpanzee).